The following is a 214-amino-acid chain: Oxaloacetate tautomerase fahd-1, mitochondrial (214 aa).

Glu65, Glu67, and Asp96 together coordinate Mg(2+).

It belongs to the FAH family. Requires Mg(2+) as cofactor. Mn(2+) serves as cofactor. Widely expressed.

It is found in the mitochondrion. The enzyme catalyses oxaloacetate = enol-oxaloacetate. Functionally, tautomerase that converts enol-oxaloacetate, a strong inhibitor of succinate dehydrogenase, to the physiological keto form of oxaloacetate. The polypeptide is Oxaloacetate tautomerase fahd-1, mitochondrial (Caenorhabditis elegans).